The sequence spans 84 residues: Large ribosomal subunit protein bL27 (84 aa).

The segment at 1-23 (MAHKKGASSSRNGRESAAQRLGV) is disordered.

It belongs to the bacterial ribosomal protein bL27 family.

In Salinispora arenicola (strain CNS-205), this protein is Large ribosomal subunit protein bL27.